A 126-amino-acid polypeptide reads, in one-letter code: Small ribosomal subunit protein bS16 (126 aa).

The disordered stretch occupies residues 87-126; it reads ARSNPEKALPGKRALERVAEKKQKAEDAAAAAAAEASAAE. The span at 99–113 shows a compositional bias: basic and acidic residues; it reads RALERVAEKKQKAED. Over residues 114 to 126 the composition is skewed to low complexity; sequence AAAAAAAEASAAE.

This sequence belongs to the bacterial ribosomal protein bS16 family.

The protein is Small ribosomal subunit protein bS16 of Agrobacterium fabrum (strain C58 / ATCC 33970) (Agrobacterium tumefaciens (strain C58)).